Here is a 567-residue protein sequence, read N- to C-terminus: Glucose-6-phosphate isomerase, cytosolic (567 aa).

Glu360 functions as the Proton donor in the catalytic mechanism. Residues His391 and Lys516 contribute to the active site.

Belongs to the GPI family. Homodimer.

The protein localises to the cytoplasm. The enzyme catalyses alpha-D-glucose 6-phosphate = beta-D-fructose 6-phosphate. Its pathway is carbohydrate degradation; glycolysis; D-glyceraldehyde 3-phosphate and glycerone phosphate from D-glucose: step 2/4. This is Glucose-6-phosphate isomerase, cytosolic (PHI1) from Zea mays (Maize).